A 291-amino-acid polypeptide reads, in one-letter code: ATP synthase gamma chain (291 aa).

The protein belongs to the ATPase gamma chain family. In terms of assembly, F-type ATPases have 2 components, CF(1) - the catalytic core - and CF(0) - the membrane proton channel. CF(1) has five subunits: alpha(3), beta(3), gamma(1), delta(1), epsilon(1). CF(0) has three main subunits: a, b and c.

The protein localises to the cell inner membrane. Its function is as follows. Produces ATP from ADP in the presence of a proton gradient across the membrane. The gamma chain is believed to be important in regulating ATPase activity and the flow of protons through the CF(0) complex. This chain is ATP synthase gamma chain, found in Burkholderia multivorans (strain ATCC 17616 / 249).